The primary structure comprises 549 residues: Eukaryotic translation initiation factor 4B2 (549 aa).

2 disordered regions span residues 1–446 (MSKP…DLIR) and 465–549 (FRPR…REGW). Positions 24–46 (AEATATAADSQSFPSLKEAATAK) are enriched in low complexity. Gly residues-rich tracts occupy residues 96-109 (RLGGGFSSYGGGRS) and 126-136 (SWGGGGGGRRS). The short motif at 169-176 (GKKSLPSF) is the Nuclear localization signal 1 element. The span at 184–218 (RYGGGGGSFGGGGGGGAGSYGGGGAGAGSGGGGGF) shows a compositional bias: gly residues. The Nuclear localization signal 2 motif lies at 234–241 (SSTFGSGF). Residues 263 to 278 (QEERRRLVFEPRKADT) show a composition bias toward basic and acidic residues. Polar residues predominate over residues 281-292 (SETPTAVKTSKP). Over residues 299–323 (RPREQVLAEKGLDWKKLDSDIEAKK) the composition is skewed to basic and acidic residues. The segment covering 327 to 349 (SRPSSAQSSRPSSAQSNRSESSA) has biased composition (low complexity). Composition is skewed to basic and acidic residues over residues 369 to 431 (AKPR…KESQ), 485 to 507 (ERPHSRAGSIDESRSVESMERPR), and 518 to 549 (PVDDRRNFQGSKERGFFNNRNFDRSSSAREGW).

This sequence belongs to the eIF-4 subunit B family. In terms of assembly, homodimer. Nonspherical monomer. mRNA-discriminating component of initiation complexes. Phosphorylated.

It localises to the nucleus. Functionally, promotes the eIF4F and eIF4A RNA-dependent ATP-hydrolysis activity with different efficiency depending on mRNAs, thus providing mRNA discrimination during initiation of translation. The chain is Eukaryotic translation initiation factor 4B2 from Arabidopsis thaliana (Mouse-ear cress).